The primary structure comprises 228 residues: Max-interacting protein 1 (228 aa).

2 disordered regions span residues 29 to 76 (GYAS…NELE) and 161 to 228 (IGST…SFTS). Basic residues predominate over residues 43–56 (QHSKPPRRLSRAQK). Residues 57 to 70 (HSSGSSNTSTANRS) are compositionally biased toward polar residues. A bHLH domain is found at 67–119 (ANRSTHNELEKNRRAHLRLCLERLKVLIPLGPDCTRHTTLGLLNKAKAHIKKL). Residues 173–183 (EREEIEVDVES) show a composition bias toward acidic residues. The span at 216 to 228 (GYSSASVKLSFTS) shows a compositional bias: polar residues.

As to quaternary structure, interacts with SMC3. Efficient DNA binding requires dimerization with another bHLH protein. Binds DNA as a heterodimer with MAX. Interacts with RNF17. In terms of tissue distribution, high levels found in the brain, heart and lung while lower levels are seen in the liver, kidney and skeletal muscle.

It localises to the nucleus. Functionally, transcriptional repressor. MXI1 binds with MAX to form a sequence-specific DNA-binding protein complex which recognizes the core sequence 5'-CAC[GA]TG-3'. MXI1 thus antagonizes MYC transcriptional activity by competing for MAX. This chain is Max-interacting protein 1 (MXI1), found in Homo sapiens (Human).